Here is an 880-residue protein sequence, read N- to C-terminus: GRB2-associated and regulator of MAPK protein 2 (880 aa).

The tract at residues 12–320 (RWSMGAFPLD…HFLLLTDTPR (309 aa)) is CABIT. Disordered regions lie at residues 385-407 (PGAV…PGDS), 461-483 (IVGP…SEAV), 527-548 (SSLS…GSGS), 569-611 (SESS…ADTP), and 633-713 (APFG…ELGQ). 2 stretches are compositionally biased toward low complexity: residues 640-663 (PFSG…STSG) and 683-696 (QGYS…LSSS). A Phosphoserine modification is found at Ser-740. An SAM domain is found at 813–877 (SALSLEEVSR…KIMQFIKGWR (65 aa)).

It belongs to the GAREM family.

In terms of biological role, probable adapter protein that provides a critical link between cell surface epidermal growth factor receptor and the MAPK/ERK signaling pathway. The chain is GRB2-associated and regulator of MAPK protein 2 (Garem2) from Mus musculus (Mouse).